Reading from the N-terminus, the 146-residue chain is NADH-ubiquinone oxidoreductase chain 6 (146 aa).

4 helical membrane-spanning segments follow: residues 10 to 30 (ILAIGLLSPVQSILALILLFV), 43 to 63 (LMGILYILVYVGAIAILFLFI), 81 to 101 (VIVLILIPLIPLDIAFEPIAI), and 124 to 144 (APMLVIIGIILIVSVIGAIAM).

This sequence belongs to the complex I subunit 6 family.

It localises to the mitochondrion membrane. The catalysed reaction is a ubiquinone + NADH + 5 H(+)(in) = a ubiquinol + NAD(+) + 4 H(+)(out). In terms of biological role, core subunit of the mitochondrial membrane respiratory chain NADH dehydrogenase (Complex I) that is believed to belong to the minimal assembly required for catalysis. Complex I functions in the transfer of electrons from NADH to the respiratory chain. The immediate electron acceptor for the enzyme is believed to be ubiquinone. The sequence is that of NADH-ubiquinone oxidoreductase chain 6 (NAD6) from Candida albicans (strain SC5314 / ATCC MYA-2876) (Yeast).